The chain runs to 25 residues: Phospholipase A1 verutoxin-2a (25 aa).

Belongs to the AB hydrolase superfamily. Lipase family. Contains six disulfide bonds. In terms of tissue distribution, expressed by the venom gland.

The protein localises to the secreted. The enzyme catalyses a 1,2-diacyl-sn-glycero-3-phosphocholine + H2O = a 2-acyl-sn-glycero-3-phosphocholine + a fatty acid + H(+). The catalysed reaction is 1-(9Z-octadecenoyl)-2-hexadecanoyl-sn-glycero-3-phosphocholine + H2O = 2-hexadecanoyl-sn-glycero-3-phosphocholine + (9Z)-octadecenoate + H(+). It carries out the reaction a 1-acyl-sn-glycero-3-phosphocholine + H2O = sn-glycerol 3-phosphocholine + a fatty acid + H(+). The protein operates within phospholipid metabolism. Activity is maximal in the presence of calcium. However, unlike phospholipases A2 whose catalytic activity is strictly calcium-dependent, this enzyme shows considerable catalytic activity on phosphatidylcholine emulsified in calcium free solution; the catalytic activity of VT-2a assayed in the absence of calcium ions is 18-20% of that assayed in solution containing calcium ions. Functionally, catalyzes the hydrolysis of glycerophospholipids such as phosphatidylcholine (1,2-diacyl-sn-glycero-3-phosphocholine) and has a moderate activity to hydrolyze lysoglycerophospholipids such as lysophosphatidylcholine (1-acyl-sn-glycero-3-phosphocholine), but is unable to hydrolyze sphingomyelin. In addition to acting as an allergen, it possesses a potent hemolytic activity on red blood cells of mice (98.8% of hemolysis at 3.0 ug/ml). This is Phospholipase A1 verutoxin-2a from Vespa velutina (Asian yellow-legged hornet).